We begin with the raw amino-acid sequence, 510 residues long: ATP synthase subunit alpha (510 aa).

An ATP-binding site is contributed by 169–176 (GDRQTGKT).

This sequence belongs to the ATPase alpha/beta chains family. As to quaternary structure, F-type ATPases have 2 components, CF(1) - the catalytic core - and CF(0) - the membrane proton channel. CF(1) has five subunits: alpha(3), beta(3), gamma(1), delta(1), epsilon(1). CF(0) has four main subunits: a(1), b(1), b'(1) and c(9-12).

It is found in the cell inner membrane. It carries out the reaction ATP + H2O + 4 H(+)(in) = ADP + phosphate + 5 H(+)(out). In terms of biological role, produces ATP from ADP in the presence of a proton gradient across the membrane. The alpha chain is a regulatory subunit. The polypeptide is ATP synthase subunit alpha (Rhodospirillum rubrum (strain ATCC 11170 / ATH 1.1.1 / DSM 467 / LMG 4362 / NCIMB 8255 / S1)).